The sequence spans 337 residues: MQSIPIKNVGESRLVDPFQRQYYYLRLSITDQCNFRCTYCLPDGYQPEANKPSFLTLKEITHLAQAFAEMGTEKIRLTGGEPTLRKDFISIAESITNIDGIRQLAVTTNGYRMAKDVADWKKAGITSINVSVDSLDPKMFHQITGINKFDDVMRGIDRAFEVGYNKVKVNSVLMKNLNDKEFEQFLAWVKDRPIQMRFIELMQTGEMDSFFDKFHLSGQVLADKLLKNGWTLQHKSHTDGPAKVFTHPDYAGEIGLIMPYEKNFCASCNRLRVSAKGKLHLCLFGEEGIELRDLLQSHEQQGILQARIFAALQGKREHHYLHIGDTGVRNHLASIGG.

Residues 17 to 243 form the Radical SAM core domain; sequence PFQRQYYYLR…HKSHTDGPAK (227 aa). Arg26 contributes to the GTP binding site. Residues Cys33 and Cys37 each contribute to the [4Fe-4S] cluster site. Tyr39 contacts S-adenosyl-L-methionine. Residue Cys40 coordinates [4Fe-4S] cluster. Arg76 is a binding site for GTP. S-adenosyl-L-methionine is bound at residue Gly80. GTP is bound at residue Thr107. Ser131 contributes to the S-adenosyl-L-methionine binding site. A GTP-binding site is contributed by Lys168. Met202 contacts S-adenosyl-L-methionine. 2 residues coordinate [4Fe-4S] cluster: Cys265 and Cys268. A GTP-binding site is contributed by 270–272; that stretch reads RLR. A [4Fe-4S] cluster-binding site is contributed by Cys282.

Belongs to the radical SAM superfamily. MoaA family. Monomer and homodimer. The cofactor is [4Fe-4S] cluster.

It carries out the reaction GTP + AH2 + S-adenosyl-L-methionine = (8S)-3',8-cyclo-7,8-dihydroguanosine 5'-triphosphate + 5'-deoxyadenosine + L-methionine + A + H(+). It functions in the pathway cofactor biosynthesis; molybdopterin biosynthesis. Its function is as follows. Catalyzes the cyclization of GTP to (8S)-3',8-cyclo-7,8-dihydroguanosine 5'-triphosphate. In Haemophilus influenzae (strain ATCC 51907 / DSM 11121 / KW20 / Rd), this protein is GTP 3',8-cyclase.